The sequence spans 238 residues: Ribonuclease PH (238 aa).

Phosphate-binding positions include Arg-86 and 124–126 (GTR).

Belongs to the RNase PH family. Homohexameric ring arranged as a trimer of dimers.

It catalyses the reaction tRNA(n+1) + phosphate = tRNA(n) + a ribonucleoside 5'-diphosphate. Its function is as follows. Phosphorolytic 3'-5' exoribonuclease that plays an important role in tRNA 3'-end maturation. Removes nucleotide residues following the 3'-CCA terminus of tRNAs; can also add nucleotides to the ends of RNA molecules by using nucleoside diphosphates as substrates, but this may not be physiologically important. Probably plays a role in initiation of 16S rRNA degradation (leading to ribosome degradation) during starvation. The polypeptide is Ribonuclease PH (Phenylobacterium zucineum (strain HLK1)).